Reading from the N-terminus, the 288-residue chain is Glycine--tRNA ligase alpha subunit (288 aa).

This sequence belongs to the class-II aminoacyl-tRNA synthetase family. Tetramer of two alpha and two beta subunits.

The protein resides in the cytoplasm. It catalyses the reaction tRNA(Gly) + glycine + ATP = glycyl-tRNA(Gly) + AMP + diphosphate. The polypeptide is Glycine--tRNA ligase alpha subunit (Rickettsia africae (strain ESF-5)).